Consider the following 98-residue polypeptide: uncharacterized protein (98 aa).

Residues 1-10 are compositionally biased toward basic residues; the sequence is MARRRKPLHR. The interval 1-21 is disordered; that stretch reads MARRRKPLHRQRPEPPSWALR.

This is an uncharacterized protein from Mycobacterium bovis (strain ATCC BAA-935 / AF2122/97).